A 441-amino-acid polypeptide reads, in one-letter code: Chromosome partition protein MukF (441 aa).

Positions 208-236 (LDETSGNLRELQDTLNAAGDKLQAQLLRI) are leucine-zipper.

The protein belongs to the MukF family. As to quaternary structure, interacts, and probably forms a ternary complex, with MukE and MukB via its C-terminal region. The complex formation is stimulated by calcium or magnesium. It is required for an interaction between MukE and MukB.

Its subcellular location is the cytoplasm. It localises to the nucleoid. In terms of biological role, involved in chromosome condensation, segregation and cell cycle progression. May participate in facilitating chromosome segregation by condensation DNA from both sides of a centrally located replisome during cell division. Not required for mini-F plasmid partitioning. Probably acts via its interaction with MukB and MukE. Overexpression results in anucleate cells. It has a calcium binding activity. This chain is Chromosome partition protein MukF, found in Pasteurella multocida (strain Pm70).